Consider the following 353-residue polypeptide: Basic membrane protein C (353 aa).

The N-terminal stretch at 1-16 (MFKRFIFITLSLLVFA) is a signal peptide. Cysteine 17 carries N-palmitoyl cysteine lipidation. Cysteine 17 is lipidated: S-diacylglycerol cysteine.

This sequence belongs to the BMP lipoprotein family. In terms of assembly, monomer.

The protein resides in the cell inner membrane. May be part of an ABC-type nucleoside uptake system involved in the purine salvage pathway. The chain is Basic membrane protein C (bmpC) from Borreliella burgdorferi (strain N40) (Borrelia burgdorferi).